A 312-amino-acid polypeptide reads, in one-letter code: Porphobilinogen deaminase (312 aa).

S-(dipyrrolylmethanemethyl)cysteine is present on C243.

The protein belongs to the HMBS family. Monomer. The cofactor is dipyrromethane.

It catalyses the reaction 4 porphobilinogen + H2O = hydroxymethylbilane + 4 NH4(+). Its pathway is porphyrin-containing compound metabolism; protoporphyrin-IX biosynthesis; coproporphyrinogen-III from 5-aminolevulinate: step 2/4. In terms of biological role, tetrapolymerization of the monopyrrole PBG into the hydroxymethylbilane pre-uroporphyrinogen in several discrete steps. The chain is Porphobilinogen deaminase from Vibrio parahaemolyticus serotype O3:K6 (strain RIMD 2210633).